We begin with the raw amino-acid sequence, 136 residues long: Large ribosomal subunit protein uL22 (136 aa).

It belongs to the universal ribosomal protein uL22 family. Part of the 50S ribosomal subunit.

In terms of biological role, this protein binds specifically to 23S rRNA; its binding is stimulated by other ribosomal proteins, e.g. L4, L17, and L20. It is important during the early stages of 50S assembly. It makes multiple contacts with different domains of the 23S rRNA in the assembled 50S subunit and ribosome. Its function is as follows. The globular domain of the protein is located near the polypeptide exit tunnel on the outside of the subunit, while an extended beta-hairpin is found that lines the wall of the exit tunnel in the center of the 70S ribosome. This is Large ribosomal subunit protein uL22 from Bacteroides fragilis (strain ATCC 25285 / DSM 2151 / CCUG 4856 / JCM 11019 / LMG 10263 / NCTC 9343 / Onslow / VPI 2553 / EN-2).